The chain runs to 317 residues: MSAPETTAPLQPPAAQAASLPGSLAESLASSGITELLAQLDRELIGLKPVKARIRDIAALLLVDKLRAARGFSAGAPSLHMCFTGNPGTGKTTVAMRMAQILHQLGYVRRGHLVAVTRDDLVGQYIGHTAPKTKEILKKALGGVLFIDEAYYLYRPENERDYGQEAIEILLQVMENNRDDLVVILAGYKDRMDRFFESNPGMSSRVAHHVDFPDYQLDELRQIADLMLAEMQYRFDDESRAVFADYLARRMAQPHFANARSVRNALDRARLRHASRLLDDAGTVADDRTLTTITASDLLASRVFSKAAPAAQTPAKE.

Residue 85–92 (GNPGTGKT) coordinates ATP.

This sequence belongs to the CbxX/CfxQ family.

Seems to be necessary for the expression of RuBisCO. The sequence is that of Protein CbxX, plasmid (cbxXP) from Cupriavidus necator (strain ATCC 17699 / DSM 428 / KCTC 22496 / NCIMB 10442 / H16 / Stanier 337) (Ralstonia eutropha).